Reading from the N-terminus, the 414-residue chain is Cell division protein FtsA (414 aa).

It belongs to the FtsA/MreB family. As to quaternary structure, self-interacts. Interacts with FtsZ.

It is found in the cell inner membrane. In terms of biological role, cell division protein that is involved in the assembly of the Z ring. May serve as a membrane anchor for the Z ring. This chain is Cell division protein FtsA, found in Neisseria meningitidis serogroup B (strain ATCC BAA-335 / MC58).